The following is a 138-amino-acid chain: Glutaredoxin-like protein C5orf63 (138 aa).

A disulfide bridge links Cys41 with Cys44. Residues 55–64 show a composition bias toward basic and acidic residues; sequence ENRQPYKDQK. Residues 55–88 form a disordered region; it reads ENRQPYKDQKLPGTRRRRSPSSPSHPHMASQSGK.

Belongs to the glutaredoxin family. YDR286C subfamily.

The polypeptide is Glutaredoxin-like protein C5orf63 (C5orf63) (Homo sapiens (Human)).